A 210-amino-acid polypeptide reads, in one-letter code: Cell wall protein SRL1 (210 aa).

The N-terminal stretch at 1–19 (MLQSVVFFALLTFASSVSA) is a signal peptide. N23 is a glycosylation site (N-linked (GlcNAc...) asparagine). Disordered regions lie at residues 80–99 (SLST…HEIT) and 118–142 (LSPS…VKSF). The span at 118–127 (LSPSSTAASV) shows a compositional bias: low complexity. Positions 132–141 (SNNKDAKVKS) are enriched in basic and acidic residues. 3 N-linked (GlcNAc...) asparagine glycosylation sites follow: N174, N200, and N206.

It localises to the secreted. It is found in the cell wall. Its subcellular location is the cell surface. Its function is as follows. Required to stabilize the cell wall in the absence of multiple GPI-anchored mannoproteins. The polypeptide is Cell wall protein SRL1 (SRL1) (Saccharomyces cerevisiae (strain ATCC 204508 / S288c) (Baker's yeast)).